Consider the following 926-residue polypeptide: Serine/threonine-protein kinase SIK2 (926 aa).

The Protein kinase domain occupies 20–271 (YDIEGTLGKG…IAQIKEHKWM (252 aa)). The residue at position 25 (Thr-25) is a Phosphothreonine. Residues 26-34 (LGKGNFAVV) and Lys-49 contribute to the ATP site. Lys-53 carries the post-translational modification N6-acetyllysine; by EP300. Residue Asp-142 is the Proton acceptor of the active site. Thr-175 bears the Phosphothreonine; by LKB1 mark. The 41-residue stretch at 295–335 (EFNEQVLRLMHSLGIDQQKTIESLQNKSYNHFAAIYFLLVE) folds into the UBA domain. Thr-484 bears the Phosphothreonine mark. Phosphoserine occurs at positions 534 and 587. Composition is skewed to low complexity over residues 644–659 (SSCP…ESVS) and 742–756 (SSYP…LPRQ). Disordered regions lie at residues 644-666 (SSCP…ASVH), 742-776 (SSYP…PLSP), and 801-896 (PLPS…SSYD). The span at 765-774 (APPFSLTQPL) shows a compositional bias: polar residues. The span at 822 to 834 (QPPPPPPPPPPRQ) shows a compositional bias: pro residues.

It belongs to the protein kinase superfamily. CAMK Ser/Thr protein kinase family. SNF1 subfamily. In terms of assembly, interacts with and phosphorylates TORC2/CRTC2. The cofactor is Mg(2+). Post-translationally, phosphorylated at Thr-175 by STK11/LKB1 in complex with STE20-related adapter-alpha (STRADA) pseudo kinase and CAB39. Phosphorylated at Thr-484 in response to insulin in adipocytes. In terms of processing, acetylation at Lys-53 inhibits kinase activity. Deacetylated by HDAC6.

Its subcellular location is the cytoplasm. It is found in the endoplasmic reticulum membrane. The enzyme catalyses L-seryl-[protein] + ATP = O-phospho-L-seryl-[protein] + ADP + H(+). The catalysed reaction is L-threonyl-[protein] + ATP = O-phospho-L-threonyl-[protein] + ADP + H(+). Its activity is regulated as follows. Activated by phosphorylation on Thr-175. Serine/threonine-protein kinase that plays a role in many biological processes such as fatty acid oxidation, autophagy, immune response or glucose metabolism. Phosphorylates 'Ser-794' of IRS1 in insulin-stimulated adipocytes, potentially modulating the efficiency of insulin signal transduction. Inhibits CREB activity by phosphorylating and repressing TORCs, the CREB-specific coactivators. Phosphorylates EP300 and thus inhibits its histone acetyltransferase activity. In turn, regulates the DNA-binding ability of several transcription factors such as PPARA or MLXIPL. Also plays a role in thymic T-cell development. This chain is Serine/threonine-protein kinase SIK2 (SIK2), found in Homo sapiens (Human).